We begin with the raw amino-acid sequence, 399 residues long: Elongation factor Tu (399 aa).

The 200-residue stretch at Lys10 to Val209 folds into the tr-type G domain. Residues Gly19–Thr26 form a G1 region. Gly19–Thr26 contributes to the GTP binding site. Residue Thr26 coordinates Mg(2+). The tract at residues Gly60 to Ala64 is G2. Positions Asp81–Gly84 are G3. Residues Asp81–His85 and Asn136–Asp139 contribute to the GTP site. Residues Asn136–Asp139 are G4. Residues Ser174–Leu176 are G5.

It belongs to the TRAFAC class translation factor GTPase superfamily. Classic translation factor GTPase family. EF-Tu/EF-1A subfamily. In terms of assembly, monomer.

The protein resides in the cytoplasm. It carries out the reaction GTP + H2O = GDP + phosphate + H(+). Functionally, GTP hydrolase that promotes the GTP-dependent binding of aminoacyl-tRNA to the A-site of ribosomes during protein biosynthesis. In Campylobacter concisus (strain 13826), this protein is Elongation factor Tu.